Reading from the N-terminus, the 554-residue chain is Chaperonin GroEL (554 aa).

ATP is bound by residues 30–33, K51, 87–91, G415, 478–480, and D494; these read TLGP, DGTTT, and DAA.

It belongs to the chaperonin (HSP60) family. In terms of assembly, forms a cylinder of 14 subunits composed of two heptameric rings stacked back-to-back. Interacts with the co-chaperonin GroES.

It localises to the cytoplasm. It catalyses the reaction ATP + H2O + a folded polypeptide = ADP + phosphate + an unfolded polypeptide.. Together with its co-chaperonin GroES, plays an essential role in assisting protein folding. The GroEL-GroES system forms a nano-cage that allows encapsulation of the non-native substrate proteins and provides a physical environment optimized to promote and accelerate protein folding. This is Chaperonin GroEL from Pelobacter propionicus (strain DSM 2379 / NBRC 103807 / OttBd1).